Reading from the N-terminus, the 436-residue chain is GTPase Der (436 aa).

2 consecutive EngA-type G domains span residues 4–167 and 175–351; these read PIVA…PDEA and IRFS…DNHR. GTP contacts are provided by residues 10–17, 57–61, 119–122, 181–188, 229–233, and 294–297; these read GRPNVGKS, DTGGI, NKVD, DTAGM, and NKWD. The KH-like domain maps to 352–436; that stretch reads KRITSSTLND…PIKLIVRARK (85 aa).

It belongs to the TRAFAC class TrmE-Era-EngA-EngB-Septin-like GTPase superfamily. EngA (Der) GTPase family. As to quaternary structure, associates with the 50S ribosomal subunit.

Its function is as follows. GTPase that plays an essential role in the late steps of ribosome biogenesis. The protein is GTPase Der of Leuconostoc mesenteroides subsp. mesenteroides (strain ATCC 8293 / DSM 20343 / BCRC 11652 / CCM 1803 / JCM 6124 / NCDO 523 / NBRC 100496 / NCIMB 8023 / NCTC 12954 / NRRL B-1118 / 37Y).